The chain runs to 148 residues: Deoxyuridine 5'-triphosphate nucleotidohydrolase (148 aa).

Residues 67 to 69 (RSG), asparagine 80, 84 to 86 (LID), and methionine 94 contribute to the substrate site.

The protein belongs to the dUTPase family. Mg(2+) serves as cofactor.

The enzyme catalyses dUTP + H2O = dUMP + diphosphate + H(+). It functions in the pathway pyrimidine metabolism; dUMP biosynthesis; dUMP from dCTP (dUTP route): step 2/2. In terms of biological role, this enzyme is involved in nucleotide metabolism: it produces dUMP, the immediate precursor of thymidine nucleotides and it decreases the intracellular concentration of dUTP so that uracil cannot be incorporated into DNA. The sequence is that of Deoxyuridine 5'-triphosphate nucleotidohydrolase from Burkholderia ambifaria (strain MC40-6).